Consider the following 74-residue polypeptide: Probable tetrachloroethene reductive dehalogenase membrane anchor protein (74 aa).

The next 2 membrane-spanning stretches (helical) occupy residues alanine 11–glycine 31 and alanine 40–methionine 60.

Belongs to the PceB family.

It is found in the cell inner membrane. Functionally, may act as a membrane anchor for the tetrachloroethene reductive dehalogenase PceA. In Sulfurospirillum multivorans (Dehalospirillum multivorans), this protein is Probable tetrachloroethene reductive dehalogenase membrane anchor protein.